The primary structure comprises 175 residues: Gamma-crystallin B (175 aa).

Beta/gamma crystallin 'Greek key' domains are found at residues 2–40 (GKIT…RVDS) and 41–83 (GCWM…RLIP). A connecting peptide region spans residues 84 to 88 (QHSGT). 2 Beta/gamma crystallin 'Greek key' domains span residues 89-129 (YRMR…NVME) and 130-172 (GCWV…RRVM).

This sequence belongs to the beta/gamma-crystallin family.

In terms of biological role, crystallins are the dominant structural components of the vertebrate eye lens. The sequence is that of Gamma-crystallin B (Crygb) from Rattus norvegicus (Rat).